The chain runs to 354 residues: MAILNLDLGERSYPIYIDSGLINKTDLLSSHIRAKRVCIVTNDIVAPLYLDSLKAKLTDFEVDEVILPDGEAEKNLANFEVIISHLLTLEHGRDTTLIALGGGVIGDITGFAAACYQRGIDFIQIPTSLLSQVDSSVGGKTAVNHPLGKNMVGAFYQPKAVFIDIDSLTTLPIREFNAGMAEVIKYGILGDKEFFLWLEDNISAIKAGEKQVLAQMIEKCCQCKADIVASDEKESGVRALLNLGHTFGHAIEAEQGYGKWLHGEAVATGMVLAAKLALAMNLLEVSEFRRIEKLISAFDLPITAPKNMGFAEFIRHMRRDKKNIAGKLRFIIPTAIGQSEIRDDVTQDTLQEIL.

NAD(+) is bound by residues 69-74 (DGEAEK), 103-107 (GVIGD), 127-128 (TS), lysine 140, and lysine 149. Zn(2+)-binding residues include glutamate 182, histidine 245, and histidine 262.

It belongs to the sugar phosphate cyclases superfamily. Dehydroquinate synthase family. Requires Co(2+) as cofactor. Zn(2+) serves as cofactor. NAD(+) is required as a cofactor.

It is found in the cytoplasm. It carries out the reaction 7-phospho-2-dehydro-3-deoxy-D-arabino-heptonate = 3-dehydroquinate + phosphate. Its pathway is metabolic intermediate biosynthesis; chorismate biosynthesis; chorismate from D-erythrose 4-phosphate and phosphoenolpyruvate: step 2/7. Functionally, catalyzes the conversion of 3-deoxy-D-arabino-heptulosonate 7-phosphate (DAHP) to dehydroquinate (DHQ). The protein is 3-dehydroquinate synthase of Colwellia psychrerythraea (strain 34H / ATCC BAA-681) (Vibrio psychroerythus).